The chain runs to 208 residues: LysM and putative peptidoglycan-binding domain-containing protein 2 (208 aa).

Residues 1 to 54 (MAEFSPVLPPLRDDGGGGRYGQPLFPRSRSGSESDSELSQSLARTKTRSYGSTA) are disordered. Residues 27–42 (RSRSGSESDSELSQSL) show a composition bias toward low complexity. The LysM domain occupies 65–109 (IEHRVTDGETLQGIALKYGVTMEQIKRVNKLFSNDCIFLRNTLSI). 2 disordered regions span residues 122-169 (LSLE…EELS) and 187-208 (AARKLKEDGGREEDDTNSYQEI). Positions 129–140 (SEGNTPQESPCV) are enriched in polar residues. Positions 147 to 156 (PSPPPEPSVP) are enriched in pro residues.

This chain is LysM and putative peptidoglycan-binding domain-containing protein 2 (lysmd2), found in Danio rerio (Zebrafish).